A 507-amino-acid chain; its full sequence is ATP synthase subunit alpha, plastid (507 aa).

ATP is bound at residue 170 to 177 (GDRQTGKT).

This sequence belongs to the ATPase alpha/beta chains family. As to quaternary structure, F-type ATPases have 2 components, CF(1) - the catalytic core - and CF(0) - the membrane proton channel. CF(1) has five subunits: alpha(3), beta(3), gamma(1), delta(1), epsilon(1). CF(0) has four main subunits: a, b, b' and c.

Its subcellular location is the plastid membrane. It carries out the reaction ATP + H2O + 4 H(+)(in) = ADP + phosphate + 5 H(+)(out). Functionally, produces ATP from ADP in the presence of a proton gradient across the membrane. The alpha chain is a regulatory subunit. The polypeptide is ATP synthase subunit alpha, plastid (Cuscuta obtusiflora (Peruvian dodder)).